The following is a 372-amino-acid chain: Pristinol synthase (372 aa).

Positions 1-12 (MAHETTSGRRLP) are enriched in basic and acidic residues. The interval 1–23 (MAHETTSGRRLPDPTSPSDPTRR) is disordered. Residues Asp100 and Asp104 each coordinate Mg(2+). Residues 100–104 (DDQFD) carry the DDXXD motif motif. Arg197 lines the substrate pocket. Mg(2+) is bound by residues Asn243 and Ser247. Substrate is bound at residue Lys250. Glu251 lines the Mg(2+) pocket. A substrate-binding site is contributed by 337 to 338 (RY). The interval 349 to 372 (GRRRPWDGLTTATGTASPRHPRRA) is disordered.

The protein belongs to the terpene synthase family. Mg(2+) serves as cofactor.

It carries out the reaction (2E,6E)-farnesyl diphosphate + H2O = (+)-(2S,3R,9R)-pristinol + diphosphate. It participates in secondary metabolite biosynthesis; terpenoid biosynthesis. Functionally, catalyzes the conversion of (2E,6E)-farnesyl diphosphate (FPP) to yield a new 5-8 bicyclic (pristinane) sesquiterpenol (+)-(2S,3R,9R)-pristinol via a 1,11-cyclization, which requires the abstraction of the pyrophosphate from FPP to yield the humulyl cation. The only accepted substrate is farnesyl diphosphate (FPP). The protein is Pristinol synthase of Streptomyces pristinaespiralis (strain ATCC 25486 / DSM 40338 / CBS 914.69 / JCM 4507 / KCC S-0507 / NBRC 13074 / NRRL 2958 / 5647).